Consider the following 98-residue polypeptide: MAKINFRPLHDRVVVKRIDAETKTKGGIIIPDSAKEKPQEGQVIAVGPGGRDETGKLTPIDVKVGDRVLFGKWSGTEIKLDGEELLIMKESDIMGVVG.

Belongs to the GroES chaperonin family. In terms of assembly, heptamer of 7 subunits arranged in a ring. Interacts with the chaperonin GroEL.

It localises to the cytoplasm. Together with the chaperonin GroEL, plays an essential role in assisting protein folding. The GroEL-GroES system forms a nano-cage that allows encapsulation of the non-native substrate proteins and provides a physical environment optimized to promote and accelerate protein folding. GroES binds to the apical surface of the GroEL ring, thereby capping the opening of the GroEL channel. The sequence is that of Co-chaperonin GroES 1 from Rhodopseudomonas palustris (strain ATCC BAA-98 / CGA009).